Consider the following 54-residue polypeptide: Large ribosomal subunit protein bL33 (54 aa).

Belongs to the bacterial ribosomal protein bL33 family.

This chain is Large ribosomal subunit protein bL33, found in Thermus thermophilus (strain ATCC BAA-163 / DSM 7039 / HB27).